The following is a 75-amino-acid chain: uncharacterized protein (75 aa).

A disordered region spans residues 1–23 (MADAMDLAQLREQEDRERHISNA). The segment covering 9 to 20 (QLREQEDRERHI) has biased composition (basic and acidic residues). A dksA C4-type zinc finger spans residues 35–59 (CEECDAPIPEARRRAIPGVQCCVTC).

This is an uncharacterized protein from Escherichia phage 186 (Bacteriophage 186).